The primary structure comprises 587 residues: Probable intramembrane protease YKL100C (587 aa).

Residues 1 to 85 are Lumenal-facing; the sequence is MDKYLNSFVD…HSLVFNYATL (85 aa). The chain crosses the membrane as a helical span at residues 86–106; sequence VLIASALVVIGSFTSISSIPF. Residues 107-156 lie on the Cytoplasmic side of the membrane; it reads TALPPTREHSLFDPTDFDVDHDCHVIYRENDEDKKKKKKSKRFFDMMDEK. Residues 157–177 form a helical membrane-spanning segment; the sequence is HAIILPLTSGCTLLALYFVIK. The Lumenal segment spans residues 178 to 192; it reads KLHLNWLKYVVKILN. Residues 193–213 traverse the membrane as a helical segment; the sequence is FNITLLNIPAGTFVYSYFLNS. Residues 214 to 303 lie on the Cytoplasmic side of the membrane; the sequence is LFRNLSHLAS…KSKRQISNMY (90 aa). Residues 304 to 324 form a helical membrane-spanning segment; it reads LNSALIVSFVLSIVSTVYFYL. Over 325–328 the chain is Lumenal; it reads SPND. The helical transmembrane segment at 329–349 threads the bilayer; it reads WLISNAVSMNMAIWSIAQLKL. Residues 350 to 351 are Cytoplasmic-facing; the sequence is KN. The chain crosses the membrane as a helical span at residues 352-372; that stretch reads LKSGALILIALFFYDICFVFG. Aspartate 366 is an active-site residue. The Lumenal segment spans residues 373 to 401; sequence TDVMVTVATNLDIPVKLSLPVKFNTAQNN. The chain crosses the membrane as a helical span at residues 402–422; sequence FNFSILGLGDIALPGMFIAMC. The active site involves aspartate 411. The Cytoplasmic portion of the chain corresponds to 423–450; sequence YKYDIWKWHLDHDDTEFHFLNWSYVGKY. A helical membrane pass occupies residues 451–471; the sequence is FITAMVSYVASLVSAMVSLSI. The Lumenal portion of the chain corresponds to 472 to 475; the sequence is FNTA. Residues 476–496 traverse the membrane as a helical segment; the sequence is QPALLYIVPSLLISTILVACW. The short motif at 477-479 is the PAL element; that stretch reads PAL. The Cytoplasmic segment spans residues 497-587; it reads NKDFKQFWNF…EEDLLDDESS (91 aa). A disordered region spans residues 561 to 587; it reads EFVQEEDLSDSSEEELSEEDLLDDESS.

It belongs to the peptidase A22B family.

It is found in the membrane. It localises to the endoplasmic reticulum membrane. May act as intramembrane protease. The sequence is that of Probable intramembrane protease YKL100C from Saccharomyces cerevisiae (strain ATCC 204508 / S288c) (Baker's yeast).